The sequence spans 101 residues: Urease subunit beta (101 aa).

Belongs to the urease beta subunit family. In terms of assembly, heterotrimer of UreA (gamma), UreB (beta) and UreC (alpha) subunits. Three heterotrimers associate to form the active enzyme.

The protein localises to the cytoplasm. It catalyses the reaction urea + 2 H2O + H(+) = hydrogencarbonate + 2 NH4(+). It functions in the pathway nitrogen metabolism; urea degradation; CO(2) and NH(3) from urea (urease route): step 1/1. The protein is Urease subunit beta of Burkholderia cenocepacia (strain ATCC BAA-245 / DSM 16553 / LMG 16656 / NCTC 13227 / J2315 / CF5610) (Burkholderia cepacia (strain J2315)).